Reading from the N-terminus, the 63-residue chain is Large ribosomal subunit protein uL29 (63 aa).

It belongs to the universal ribosomal protein uL29 family.

In Photobacterium profundum (strain SS9), this protein is Large ribosomal subunit protein uL29.